The following is a 364-amino-acid chain: Valine dehydrogenase (364 aa).

Lys91 is an active-site residue. NAD(+) is bound at residue 191-197 (GVGKVGH).

The protein belongs to the Glu/Leu/Phe/Val dehydrogenases family. As to quaternary structure, homodimer.

Its subcellular location is the cytoplasm. The catalysed reaction is L-valine + NAD(+) + H2O = 3-methyl-2-oxobutanoate + NH4(+) + NADH + H(+). The protein operates within amino-acid degradation; L-valine degradation. With respect to regulation, inhibited by pyridoxal 5'-phosphate (PLP). Its function is as follows. Oxidative deamination of branched-chain amino acids. Oxidizes L-valine and L-alpha-aminobutyric acid efficiently, and L-alanine and L-isoleucine less efficiently. D-valine and L-glutamate were not substrates for the enzyme. The catabolism of valine is the major source of fatty acid precursors for macrolide biosynthesis and a vital source of antibiotic precursors. The sequence is that of Valine dehydrogenase from Streptomyces albus (strain ATCC 21838 / DSM 41398 / FERM P-419 / JCM 4703 / NBRC 107858).